A 167-amino-acid chain; its full sequence is cAMP-dependent protein kinase type I-alpha regulatory subunit (167 aa).

At T12 the chain carries Phosphothreonine. 2 positions are modified to phosphoserine: S14 and S20. The short motif at R30 to I33 is the Pseudophosphorylation motif element. S34 carries the post-translational modification Phosphoserine. 3',5'-cyclic AMP contacts are provided by residues L51–S78, I79–R167, E147, and R156. S82 is subject to Phosphoserine.

This sequence belongs to the cAMP-dependent kinase regulatory chain family. As to quaternary structure, the inactive holoenzyme is composed of two regulatory chains and two catalytic chains. Activation by cAMP releases the two active catalytic monomers and the regulatory dimer. Interacts with PRKACA and PRKACB. PRKAR1A also interacts with RFC2; the complex may be involved in cell survival. Interacts with AKAP4. Interacts with RARA; the interaction occurs in the presence of cAMP or FSH and regulates RARA transcriptional activity. Interacts with the phosphorylated form of PJA2. Interacts with CBFA2T3. Interacts with PRKX; regulates this cAMP-dependent protein kinase. Interacts with smAKAP; this interaction may target PRKAR1A to the plasma membrane. Interacts with AICDA. Post-translationally, the pseudophosphorylation site binds to the substrate-binding region of the catalytic chain, resulting in the inhibition of its activity.

It is found in the cell membrane. Its function is as follows. Regulatory subunit of the cAMP-dependent protein kinases involved in cAMP signaling in cells. In Mesocricetus auratus (Golden hamster), this protein is cAMP-dependent protein kinase type I-alpha regulatory subunit.